A 1888-amino-acid polypeptide reads, in one-letter code: Protein mms22 (1888 aa).

Disordered stretches follow at residues 12 to 34 (DSQD…RGNE), 151 to 258 (FSSD…ISSN), and 316 to 354 (RRKL…SRFD). 3 stretches are compositionally biased toward polar residues: residues 13-32 (SQDS…SQRG), 212-227 (SNLN…SSTI), and 338-348 (SDNSISTPTPT).

This sequence belongs to the MMS22 family.

It is found in the nucleus. In terms of biological role, involved in protection against replication-dependent DNA damage. May act by restoring active replication forks, repairing unusual DNA structures, and/or preventing aberrant DNA rearrangement at arrested replication forks. This Schizosaccharomyces pombe (strain 972 / ATCC 24843) (Fission yeast) protein is Protein mms22 (mus7).